Consider the following 475-residue polypeptide: Bifunctional protein HldE (475 aa).

The ribokinase stretch occupies residues 1 to 318 (MKVTLPDFER…ENAVRGRAET (318 aa)). An ATP-binding site is contributed by 195–198 (NLSE). Residue D264 is part of the active site. Residues 344–475 (MTNGVFDILH…NIIKKIQKNS (132 aa)) form a cytidylyltransferase region.

This sequence in the N-terminal section; belongs to the carbohydrate kinase PfkB family. In the C-terminal section; belongs to the cytidylyltransferase family. As to quaternary structure, homodimer.

The catalysed reaction is D-glycero-beta-D-manno-heptose 7-phosphate + ATP = D-glycero-beta-D-manno-heptose 1,7-bisphosphate + ADP + H(+). It carries out the reaction D-glycero-beta-D-manno-heptose 1-phosphate + ATP + H(+) = ADP-D-glycero-beta-D-manno-heptose + diphosphate. It functions in the pathway nucleotide-sugar biosynthesis; ADP-L-glycero-beta-D-manno-heptose biosynthesis; ADP-L-glycero-beta-D-manno-heptose from D-glycero-beta-D-manno-heptose 7-phosphate: step 1/4. It participates in nucleotide-sugar biosynthesis; ADP-L-glycero-beta-D-manno-heptose biosynthesis; ADP-L-glycero-beta-D-manno-heptose from D-glycero-beta-D-manno-heptose 7-phosphate: step 3/4. Functionally, catalyzes the phosphorylation of D-glycero-D-manno-heptose 7-phosphate at the C-1 position to selectively form D-glycero-beta-D-manno-heptose-1,7-bisphosphate. In terms of biological role, catalyzes the ADP transfer from ATP to D-glycero-beta-D-manno-heptose 1-phosphate, yielding ADP-D-glycero-beta-D-manno-heptose. This is Bifunctional protein HldE from Cronobacter sakazakii (strain ATCC BAA-894) (Enterobacter sakazakii).